Reading from the N-terminus, the 187-residue chain is GTP cyclohydrolase 1 (187 aa).

The Zn(2+) site is built by cysteine 81, histidine 84, and cysteine 152.

This sequence belongs to the GTP cyclohydrolase I family. Homomer.

It carries out the reaction GTP + H2O = 7,8-dihydroneopterin 3'-triphosphate + formate + H(+). It functions in the pathway cofactor biosynthesis; 7,8-dihydroneopterin triphosphate biosynthesis; 7,8-dihydroneopterin triphosphate from GTP: step 1/1. This Pyrobaculum neutrophilum (strain DSM 2338 / JCM 9278 / NBRC 100436 / V24Sta) (Thermoproteus neutrophilus) protein is GTP cyclohydrolase 1.